We begin with the raw amino-acid sequence, 219 residues long: Small ribosomal subunit protein uS3 (219 aa).

Residues 38 to 106 form the KH type-2 domain; that stretch reads IRKYINTKLA…KVHINIVEIK (69 aa).

The protein belongs to the universal ribosomal protein uS3 family. In terms of assembly, part of the 30S ribosomal subunit. Forms a tight complex with proteins S10 and S14.

Binds the lower part of the 30S subunit head. Binds mRNA in the 70S ribosome, positioning it for translation. The protein is Small ribosomal subunit protein uS3 of Latilactobacillus sakei subsp. sakei (strain 23K) (Lactobacillus sakei subsp. sakei).